A 273-amino-acid chain; its full sequence is Urease accessory protein UreD (273 aa).

The protein belongs to the UreD family. As to quaternary structure, ureD, UreF and UreG form a complex that acts as a GTP-hydrolysis-dependent molecular chaperone, activating the urease apoprotein by helping to assemble the nickel containing metallocenter of UreC. The UreE protein probably delivers the nickel.

Its subcellular location is the cytoplasm. Functionally, required for maturation of urease via the functional incorporation of the urease nickel metallocenter. The sequence is that of Urease accessory protein UreD from Rhizobium johnstonii (strain DSM 114642 / LMG 32736 / 3841) (Rhizobium leguminosarum bv. viciae).